Reading from the N-terminus, the 311-residue chain is Giardin subunit alpha-8 (311 aa).

Annexin repeat units follow at residues 5–73 (RKAY…IRCW), 75–146 (NRHE…DRWM), 154–223 (NNVK…AAHY), and 227–295 (EPSK…SLWR).

It belongs to the annexin family. Giardin subunit alpha subfamily.

The protein localises to the cytoplasm. It localises to the cytoskeleton. Its function is as follows. Giardins are involved in parasite attachment to the intestinal mucosa and in the cytoskeletal disassembly and reassembly that marks the transition from infectious trophozoite to transmissible cyst. They may interact with other cytoskeletal proteins such as microtubules in the microribbons or crossbridges, to maintain the integrity of the ventral disk. The polypeptide is Giardin subunit alpha-8 (Giardia intestinalis (Giardia lamblia)).